The primary structure comprises 819 residues: Disintegrin and metalloproteinase domain-containing protein 9 (819 aa).

Positions 1 to 28 (MGSGARFPSGTLRVRWLLLLGLVGPVLG) are cleaved as a signal peptide. The Extracellular segment spans residues 29–697 (AARPGFQQTS…YNEMNTALRD (669 aa)). Asparagine 125, asparagine 144, asparagine 154, and asparagine 231 each carry an N-linked (GlcNAc...) asparagine glycan. Residues 212–406 (RYVELFIVVD…KGGNCLLNIP (195 aa)) enclose the Peptidase M12B domain. Intrachain disulfides connect cysteine 322-cysteine 401, cysteine 363-cysteine 385, cysteine 365-cysteine 370, cysteine 473-cysteine 493, cysteine 644-cysteine 656, cysteine 650-cysteine 662, and cysteine 664-cysteine 673. A Zn(2+)-binding site is contributed by histidine 347. Residue glutamate 348 is part of the active site. 2 residues coordinate Zn(2+): histidine 351 and histidine 357. Residues asparagine 381 and asparagine 487 are each glycosylated (N-linked (GlcNAc...) asparagine). The region spanning 414-501 (APSCGNKLVD…FCQPDVFIQN (88 aa)) is the Disintegrin domain. The EGF-like domain maps to 644–698 (CDVQKKCHGHGVCNSNKNCHCENGWAPPNCETKGYGGSVDSGPTYNEMNTALRDG). A helical transmembrane segment spans residues 698–718 (GLLVFFFLIVPLIVCAIFIFI). Over 719–819 (KRDQLWRSYF…PAPPLYSSLT (101 aa)) the chain is Cytoplasmic. Disordered regions lie at residues 734-763 (QTYESDGKNQANPSRQPGSVPRHVSPVTPP) and 780-819 (AKQPQQFPSRPPPPQPKVSSQGNLIPARPAPAPPLYSSLT). The span at 735-750 (TYESDGKNQANPSRQP) shows a compositional bias: polar residues. Serine 758 is subject to Phosphoserine. Threonine 761 carries the phosphothreonine modification.

In terms of assembly, interacts with SH3GL2 and SNX9 through its cytoplasmic tail. Interacts with ITGA6. It depends on Zn(2+) as a cofactor. Proteolytically cleaved in the trans-Golgi network before it reaches the plasma membrane to generate a mature protein. The removal of the pro-domain occurs via cleavage at two different sites. Processed most likely by a pro-protein convertase such as furin, at the boundary between the pro-domain and the catalytic domain. An additional upstream cleavage pro-protein convertase site (Arg-56/Glu-57) has an important role in the activation of ADAM9. Post-translationally, phosphorylation is induced in vitro by phorbol-12-myristate-13-acetate (PMA). In terms of tissue distribution, widely expressed. Expressed in chondrocytes. Isoform 2 is highly expressed in liver and heart.

Its subcellular location is the cell membrane. It localises to the secreted. Synthesized as an inactive form which is proteolytically cleaved to generate an active enzyme. Processing at the upstream site is particularly important for activation of the proenzyme, whereas processing at the boundary between the pro-domain and the catalytic domain does not appear to be essential. Inhibited by hydroxamic acid-based inhibitors. Functionally, metalloprotease that cleaves and releases a number of molecules with important roles in tumorigenesis and angiogenesis, such as TEK, KDR, EPHB4, CD40, VCAM1 and CDH5. May mediate cell-cell, cell-matrix interactions and regulate the motility of cells via interactions with integrins. Its function is as follows. May act as alpha-secretase for amyloid precursor protein (APP). In Homo sapiens (Human), this protein is Disintegrin and metalloproteinase domain-containing protein 9 (ADAM9).